A 76-amino-acid polypeptide reads, in one-letter code: Sec-independent protein translocase protein TatA (76 aa).

Residues 1–21 (MGGISITQLLIIVAIVVLLFG) traverse the membrane as a helical segment. Positions 45–76 (DDNKEKDAEFKSLSDDSETTAKTEKAKDKEQA) are disordered.

The protein belongs to the TatA/E family. In terms of assembly, the Tat system comprises two distinct complexes: a TatABC complex, containing multiple copies of TatA, TatB and TatC subunits, and a separate TatA complex, containing only TatA subunits. Substrates initially bind to the TatABC complex, which probably triggers association of the separate TatA complex to form the active translocon.

It is found in the cell inner membrane. Part of the twin-arginine translocation (Tat) system that transports large folded proteins containing a characteristic twin-arginine motif in their signal peptide across membranes. TatA could form the protein-conducting channel of the Tat system. The protein is Sec-independent protein translocase protein TatA of Pasteurella multocida (strain Pm70).